A 530-amino-acid polypeptide reads, in one-letter code: MARLFTPSESKYYLMALDAGTGSIRAVIFDLEGNQIAVGQAEWRHLAVPDVPGSMEFDLNKNWQLACECMRQALHNAGIAPEYIAAVSACSMREGIVLYNNEGAPIWACANVDARAAREVSELKELHNNTFENEVYRATGQTLALSAIPRLLWLAHHRSDIYRQASTITMISDWLAYMLSGELAVDPSNAGTTGLLDLTTRDWKPALLDMAGLRADILSPVKETGTLLGVVSSQAAELCGLKAGTPVVVGGGDVQLGCLGLGVVRPAQTAVLGGTFWQQVVNLAAPVTDPEMNVRVNPHVIPGMVQAESISFFTGLTMRWFRDAFCAEEKLIAERLGIDTYTLLEEMASRVPPGSWGVMPIFSDRMRFKTWYHAAPSFINLSIDPDKCNKATLFRALEENAAIVSACNLQQIADFSNIHPSSLVFAGGGSKGKLWSQILADVSGLPVNIPVVKEATALGCAIAAGVGAGIFSSMAETGERLVRWERTHTPDPEKHELYQDSRDKWQAVYQDQLGLVDHGLTTSLWKAPGL.

It belongs to the FGGY kinase family.

The protein resides in the cytoplasm. The enzyme catalyses (S)-4,5-dihydroxypentane-2,3-dione + ATP = (2S)-2-hydroxy-3,4-dioxopentyl phosphate + ADP + H(+). Its function is as follows. Catalyzes the phosphorylation of autoinducer-2 (AI-2) to phospho-AI-2, which subsequently inactivates the transcriptional regulator LsrR and leads to the transcription of the lsr operon. Phosphorylates the ring-open form of (S)-4,5-dihydroxypentane-2,3-dione (DPD), which is the precursor to all AI-2 signaling molecules, at the C5 position. The polypeptide is Autoinducer-2 kinase (Escherichia coli O139:H28 (strain E24377A / ETEC)).